Reading from the N-terminus, the 223-residue chain is ATP-dependent dethiobiotin synthetase BioD (223 aa).

Thr-16 is a binding site for Mg(2+). Residue Lys-37 is part of the active site. Ser-41 contacts substrate. Mg(2+) contacts are provided by Asp-50 and Glu-111. ATP is bound by residues Asp-50, Glu-111–Gly-114, and Asn-171–Arg-172.

This sequence belongs to the dethiobiotin synthetase family. In terms of assembly, homodimer. Requires Mg(2+) as cofactor.

The protein localises to the cytoplasm. The catalysed reaction is (7R,8S)-7,8-diammoniononanoate + CO2 + ATP = (4R,5S)-dethiobiotin + ADP + phosphate + 3 H(+). The protein operates within cofactor biosynthesis; biotin biosynthesis; biotin from 7,8-diaminononanoate: step 1/2. Its function is as follows. Catalyzes a mechanistically unusual reaction, the ATP-dependent insertion of CO2 between the N7 and N8 nitrogen atoms of 7,8-diaminopelargonic acid (DAPA, also called 7,8-diammoniononanoate) to form a ureido ring. This chain is ATP-dependent dethiobiotin synthetase BioD, found in Anaeromyxobacter sp. (strain K).